The primary structure comprises 366 residues: Ribosomal RNA large subunit methyltransferase M (366 aa).

S-adenosyl-L-methionine contacts are provided by residues S188, C221–G224, D240, D260, and D277. Catalysis depends on K306, which acts as the Proton acceptor.

The protein belongs to the class I-like SAM-binding methyltransferase superfamily. RNA methyltransferase RlmE family. RlmM subfamily. Monomer.

It localises to the cytoplasm. It carries out the reaction cytidine(2498) in 23S rRNA + S-adenosyl-L-methionine = 2'-O-methylcytidine(2498) in 23S rRNA + S-adenosyl-L-homocysteine + H(+). Functionally, catalyzes the 2'-O-methylation at nucleotide C2498 in 23S rRNA. The sequence is that of Ribosomal RNA large subunit methyltransferase M from Escherichia coli O127:H6 (strain E2348/69 / EPEC).